A 92-amino-acid polypeptide reads, in one-letter code: Protein S100-A5 (92 aa).

2 consecutive EF-hand domains span residues Met12 to Met47 and Met47 to Ala82. 7 residues coordinate Ca(2+): Thr28, Glu33, Asp60, Asn62, Asp64, Glu66, and Glu71.

This sequence belongs to the S-100 family. In terms of assembly, homodimer.

Functionally, binds calcium, zinc and copper. One subunit can simultaneously bind 2 calcium ions or 2 copper ions plus 1 zinc ion. Calcium and copper ions compete for the same binding sites. The protein is Protein S100-A5 (S100A5) of Homo sapiens (Human).